Here is a 208-residue protein sequence, read N- to C-terminus: Protein DEHYDRATION-INDUCED 19 homolog 6 (208 aa).

The disordered stretch occupies residues 151–190 (VDSPRRSEADAEGHGSSSSDDQKRREQGVMDDASKEELEE). Composition is skewed to basic and acidic residues over residues 153–163 (SPRRSEADAEG) and 170–190 (DDQKRREQGVMDDASKEELEE).

The protein belongs to the Di19 family.

The polypeptide is Protein DEHYDRATION-INDUCED 19 homolog 6 (DI19-6) (Oryza sativa subsp. japonica (Rice)).